The following is a 283-amino-acid chain: Phosphatidylglycerol--prolipoprotein diacylglyceryl transferase (283 aa).

7 consecutive transmembrane segments (helical) span residues 21–41, 62–82, 106–126, 136–156, 190–210, 218–238, and 252–272; these read IEVH…FYMA, YFLW…ILIY, FIGI…IASY, LLIY…FGRI, PSQL…VMWA, GLLI…AEFY, and LSMG…ILLY. Arginine 155 lines the a 1,2-diacyl-sn-glycero-3-phospho-(1'-sn-glycerol) pocket.

The protein belongs to the Lgt family.

It is found in the cell inner membrane. The enzyme catalyses L-cysteinyl-[prolipoprotein] + a 1,2-diacyl-sn-glycero-3-phospho-(1'-sn-glycerol) = an S-1,2-diacyl-sn-glyceryl-L-cysteinyl-[prolipoprotein] + sn-glycerol 1-phosphate + H(+). The protein operates within protein modification; lipoprotein biosynthesis (diacylglyceryl transfer). Functionally, catalyzes the transfer of the diacylglyceryl group from phosphatidylglycerol to the sulfhydryl group of the N-terminal cysteine of a prolipoprotein, the first step in the formation of mature lipoproteins. The polypeptide is Phosphatidylglycerol--prolipoprotein diacylglyceryl transferase (Helicobacter acinonychis (strain Sheeba)).